A 206-amino-acid chain; its full sequence is Outer-membrane lipoprotein LolB (206 aa).

A signal peptide spans M1–A18. C19 carries the N-palmitoyl cysteine lipid modification. A lipid anchor (S-diacylglycerol cysteine) is attached at C19.

This sequence belongs to the LolB family. As to quaternary structure, monomer.

It is found in the cell outer membrane. Plays a critical role in the incorporation of lipoproteins in the outer membrane after they are released by the LolA protein. This Haemophilus influenzae (strain PittGG) protein is Outer-membrane lipoprotein LolB.